Reading from the N-terminus, the 240-residue chain is MVQHLSAQEIIQYISDAKKSTPLKVYVNGHFENVTFPESFKVFGSEHSKVIFCEANEWKQFYQQNHSLITELEIEMDRRNSAIPLKDLTNTNARIEPGAFIREQAIIEDGAVVMMGATINIGAIVGEGTMIDMNATLGGRATTGKNVHVGAGAVLAGVIEPPSASPVVIEDNVLIGANAVILEGVRVGAGAIVAAGAIVTQDVPAGAVVAGTPAKVIKQTSEVQDSKREIVSALRKLNNE.

This sequence belongs to the transferase hexapeptide repeat family. DapH subfamily.

The enzyme catalyses (S)-2,3,4,5-tetrahydrodipicolinate + acetyl-CoA + H2O = L-2-acetamido-6-oxoheptanedioate + CoA. The protein operates within amino-acid biosynthesis; L-lysine biosynthesis via DAP pathway; LL-2,6-diaminopimelate from (S)-tetrahydrodipicolinate (acetylase route): step 1/3. In terms of biological role, catalyzes the transfer of an acetyl group from acetyl-CoA to tetrahydrodipicolinate. The polypeptide is 2,3,4,5-tetrahydropyridine-2,6-dicarboxylate N-acetyltransferase (Staphylococcus epidermidis (strain ATCC 12228 / FDA PCI 1200)).